The primary structure comprises 34 residues: MSDIN-like toxin proprotein 2 (34 aa).

A propeptide spanning residues 1-10 (MSDINTARLP) is cleaved from the precursor. Residues 11–20 (FYQFPDFKYP) constitute a cross-link (cyclopeptide (Phe-Pro)). A propeptide spanning residues 21–34 (CVGDDIEMVLARGE) is cleaved from the precursor.

This sequence belongs to the MSDIN fungal toxin family. In terms of processing, processed by the macrocyclase-peptidase enzyme POPB to yield a toxic cyclic decapeptide. POPB first removes 10 residues from the N-terminus. Conformational trapping of the remaining peptide forces the enzyme to release this intermediate rather than proceed to macrocyclization. The enzyme rebinds the remaining peptide in a different conformation and catalyzes macrocyclization of the N-terminal 10 residues.

Probable toxin that belongs to the MSDIN-like toxin family responsible for a large number of food poisoning cases and deaths. In Amanita bisporigera (Destroying angel), this protein is MSDIN-like toxin proprotein 2.